Consider the following 582-residue polypeptide: 2-succinyl-5-enolpyruvyl-6-hydroxy-3-cyclohexene-1-carboxylate synthase (582 aa).

Belongs to the TPP enzyme family. MenD subfamily. In terms of assembly, homodimer. The cofactor is Mg(2+). It depends on Mn(2+) as a cofactor. Thiamine diphosphate is required as a cofactor.

It catalyses the reaction isochorismate + 2-oxoglutarate + H(+) = 5-enolpyruvoyl-6-hydroxy-2-succinyl-cyclohex-3-ene-1-carboxylate + CO2. It participates in quinol/quinone metabolism; 1,4-dihydroxy-2-naphthoate biosynthesis; 1,4-dihydroxy-2-naphthoate from chorismate: step 2/7. Its pathway is quinol/quinone metabolism; menaquinone biosynthesis. Its function is as follows. Catalyzes the thiamine diphosphate-dependent decarboxylation of 2-oxoglutarate and the subsequent addition of the resulting succinic semialdehyde-thiamine pyrophosphate anion to isochorismate to yield 2-succinyl-5-enolpyruvyl-6-hydroxy-3-cyclohexene-1-carboxylate (SEPHCHC). In Chlorobaculum tepidum (strain ATCC 49652 / DSM 12025 / NBRC 103806 / TLS) (Chlorobium tepidum), this protein is 2-succinyl-5-enolpyruvyl-6-hydroxy-3-cyclohexene-1-carboxylate synthase.